A 157-amino-acid polypeptide reads, in one-letter code: 2-C-methyl-D-erythritol 2,4-cyclodiphosphate synthase (157 aa).

D8 and H10 together coordinate a divalent metal cation. 4-CDP-2-C-methyl-D-erythritol 2-phosphate is bound by residues 8 to 10 (DVH) and 34 to 35 (HS). H42 is a binding site for a divalent metal cation. Residues 56 to 58 (DIG), 61 to 65 (FPDTD), 100 to 106 (AQAPKMA), 132 to 135 (TTTE), F139, and R142 contribute to the 4-CDP-2-C-methyl-D-erythritol 2-phosphate site.

Belongs to the IspF family. As to quaternary structure, homotrimer. Requires a divalent metal cation as cofactor.

The enzyme catalyses 4-CDP-2-C-methyl-D-erythritol 2-phosphate = 2-C-methyl-D-erythritol 2,4-cyclic diphosphate + CMP. Its pathway is isoprenoid biosynthesis; isopentenyl diphosphate biosynthesis via DXP pathway; isopentenyl diphosphate from 1-deoxy-D-xylulose 5-phosphate: step 4/6. Its function is as follows. Involved in the biosynthesis of isopentenyl diphosphate (IPP) and dimethylallyl diphosphate (DMAPP), two major building blocks of isoprenoid compounds. Catalyzes the conversion of 4-diphosphocytidyl-2-C-methyl-D-erythritol 2-phosphate (CDP-ME2P) to 2-C-methyl-D-erythritol 2,4-cyclodiphosphate (ME-CPP) with a corresponding release of cytidine 5-monophosphate (CMP). The polypeptide is 2-C-methyl-D-erythritol 2,4-cyclodiphosphate synthase (Pseudomonas aeruginosa (strain UCBPP-PA14)).